The sequence spans 331 residues: Aspartate carbamoyltransferase catalytic subunit (331 aa).

Residues Arg-66 and Thr-67 each coordinate carbamoyl phosphate. Residue Lys-94 participates in L-aspartate binding. Positions 116, 149, and 152 each coordinate carbamoyl phosphate. Residues Arg-189 and Arg-243 each contribute to the L-aspartate site. Carbamoyl phosphate is bound by residues Gly-284 and Pro-285.

It belongs to the aspartate/ornithine carbamoyltransferase superfamily. ATCase family. As to quaternary structure, heterododecamer (2C3:3R2) of six catalytic PyrB chains organized as two trimers (C3), and six regulatory PyrI chains organized as three dimers (R2).

The catalysed reaction is carbamoyl phosphate + L-aspartate = N-carbamoyl-L-aspartate + phosphate + H(+). Its pathway is pyrimidine metabolism; UMP biosynthesis via de novo pathway; (S)-dihydroorotate from bicarbonate: step 2/3. In terms of biological role, catalyzes the condensation of carbamoyl phosphate and aspartate to form carbamoyl aspartate and inorganic phosphate, the committed step in the de novo pyrimidine nucleotide biosynthesis pathway. In Thermosynechococcus vestitus (strain NIES-2133 / IAM M-273 / BP-1), this protein is Aspartate carbamoyltransferase catalytic subunit.